Consider the following 321-residue polypeptide: MTKYALVGDVGGTNARLALCDIASGEISQAKTYSGLDYPSLEAVIRVYLEEHKVEVKDGCIAIACPITGDWVAMTNHTWAFSIAEMKKNLGFSHLEIINDFTAVSMAIPMLKKEHLIQFGGAEPVEGKPIAVYGAGTGLGVAHLVHVDKRWVSLPGEGGHVDFAPNSEEEAIILEILRAEIGHVSAERVLSGPGLVNLYRAIVKADNRLPENLKPKDITERALADSCTDCRRALSLFCVIMGRFGGNLALNLGTFGGVFIAGGIVPRFLEFFKASGFRAAFEDKGRFKEYVHDIPVYLIVHDNAGLLGSGAHLRQTLGHIL.

Residue 8-13 coordinates ATP; the sequence is GDVGGT.

It belongs to the bacterial glucokinase family.

It localises to the cytoplasm. It catalyses the reaction D-glucose + ATP = D-glucose 6-phosphate + ADP + H(+). This chain is Glucokinase, found in Shigella dysenteriae serotype 1 (strain Sd197).